The chain runs to 323 residues: COP9 signalosome complex subunit 6 (323 aa).

In terms of domain architecture, MPN spans 37 to 170 (VALHPLVILN…VSVFESVIDI (134 aa)).

The protein belongs to the peptidase M67A family. CSN6 subfamily. As to quaternary structure, component of the CSN complex, composed of COPS1/GPS1, COPS2, COPS3, COPS4, COPS5, COPS6, COPS7 (COPS7A or COPS7B), COPS8 and COPS9. In the complex, it probably interacts directly with COPS2, COPS4, COPS5, COPS7 (COPS7A or COPS7B) and COPS9. Interacts with the translation initiation factor EIF3S6. Interacts weakly with RBX1. Directly interacts with COP1 and 14-3-3 protein sigma/SFN. Interacts with ERCC6.

The protein resides in the cytoplasm. The protein localises to the nucleus. Its function is as follows. Component of the COP9 signalosome complex (CSN), a complex involved in various cellular and developmental processes. The CSN complex is an essential regulator of the ubiquitin (Ubl) conjugation pathway by mediating the deneddylation of the cullin subunits of SCF-type E3 ligase complexes, leading to decrease the Ubl ligase activity of SCF-type complexes such as SCF, CSA or DDB2. The complex is also involved in phosphorylation of p53/TP53, c-jun/JUN, IkappaBalpha/NFKBIA, ITPK1 and IRF8, possibly via its association with CK2 and PKD kinases. CSN-dependent phosphorylation of TP53 and JUN promotes and protects degradation by the Ubl system, respectively. Has some glucocorticoid receptor-responsive activity. Stabilizes COP1 through reducing COP1 auto-ubiquitination and decelerating COP1 turnover rate, hence regulates the ubiquitination of COP1 targets, including SFN. This is COP9 signalosome complex subunit 6 (COPS6) from Sus scrofa (Pig).